The following is a 175-amino-acid chain: Inorganic pyrophosphatase (175 aa).

Residues lysine 30, arginine 44, and tyrosine 56 each contribute to the substrate site. Residues aspartate 66, aspartate 71, and aspartate 103 each coordinate Mg(2+). Substrate is bound at residue tyrosine 140.

Belongs to the PPase family. In terms of assembly, homohexamer. Requires Mg(2+) as cofactor.

It is found in the cytoplasm. It catalyses the reaction diphosphate + H2O = 2 phosphate + H(+). In terms of biological role, catalyzes the hydrolysis of inorganic pyrophosphate (PPi) forming two phosphate ions. The chain is Inorganic pyrophosphatase from Thermus thermophilus (strain ATCC 27634 / DSM 579 / HB8).